We begin with the raw amino-acid sequence, 1134 residues long: Phospholipid-transporting ATPase IH (1134 aa).

The Cytoplasmic segment spans residues Met-1–Ile-61. The helical transmembrane segment at Pro-62–Leu-82 threads the bilayer. The Extracellular portion of the chain corresponds to Val-83–Asp-88. A helical transmembrane segment spans residues Thr-89–Lys-110. The Cytoplasmic segment spans residues Gln-111–Phe-296. A helical transmembrane segment spans residues Leu-297 to Trp-318. Residues Gln-319–Phe-349 lie on the Extracellular side of the membrane. The helical transmembrane segment at Leu-350–Lys-372 threads the bilayer. Residues Phe-373–Glu-881 lie on the Cytoplasmic side of the membrane. The 4-aspartylphosphate intermediate role is filled by Asp-414. ATP is bound by residues Asp-414, Lys-415, Thr-416, Glu-511, Phe-553, Lys-576, Arg-607, Thr-687, Gly-688, and Asp-689. A Mg(2+)-binding site is contributed by Asp-414. Thr-416 lines the Mg(2+) pocket. At Ser-738 the chain carries Phosphoserine. 2 residues coordinate ATP: Arg-798 and Lys-804. Residue Asp-825 coordinates Mg(2+). ATP-binding residues include Asn-828 and Asp-829. Asp-829 is a binding site for Mg(2+). A helical membrane pass occupies residues Leu-882–Phe-902. At Phe-903 to Thr-914 the chain is on the extracellular side. The chain crosses the membrane as a helical span at residues Ala-915–Leu-934. Residues Met-935–Val-964 are Cytoplasmic-facing. A helical membrane pass occupies residues Phe-965–Val-986. Residues Phe-987 to Gly-1000 lie on the Extracellular side of the membrane. Residues Asn-1001–Asp-1023 traverse the membrane as a helical segment. At Thr-1024–Trp-1029 the chain is on the cytoplasmic side. A helical transmembrane segment spans residues Ile-1030–Gly-1050. Over Gly-1051–Gln-1068 the chain is Extracellular. Residues Met-1069–Lys-1093 form a helical membrane-spanning segment. The Cytoplasmic segment spans residues Lys-1094–Phe-1134.

The protein belongs to the cation transport ATPase (P-type) (TC 3.A.3) family. Type IV subfamily. In terms of assembly, component of a P4-ATPase flippase complex which consists of a catalytic alpha subunit ATP11A and an accessory beta subunit TMEM30A. Mg(2+) is required as a cofactor. Proteolytically cleaved by CASP3. Widely expressed. Expressed in myoblasts.

The protein resides in the cell membrane. It localises to the early endosome. The protein localises to the recycling endosome. Its subcellular location is the endoplasmic reticulum membrane. It carries out the reaction ATP + H2O + phospholipidSide 1 = ADP + phosphate + phospholipidSide 2.. It catalyses the reaction a 1,2-diacyl-sn-glycero-3-phospho-L-serine(out) + ATP + H2O = a 1,2-diacyl-sn-glycero-3-phospho-L-serine(in) + ADP + phosphate + H(+). The enzyme catalyses a 1,2-diacyl-sn-glycero-3-phosphoethanolamine(out) + ATP + H2O = a 1,2-diacyl-sn-glycero-3-phosphoethanolamine(in) + ADP + phosphate + H(+). With respect to regulation, the flippase activity is inactivated by caspase-mediated cleavage in apoptotic cells, allowing for PS exposure on the cell surface and engulfment of apoptotic cells by macrophages. The ATPase activity is up-regulated by aminophospholipids PS and PE and down-regulated by increasing intracellular Ca2+ levels. Functionally, catalytic component of a P4-ATPase flippase complex which catalyzes the hydrolysis of ATP coupled to the transport of aminophospholipids, phosphatidylserines (PS) and phosphatidylethanolamines (PE), from the outer to the inner leaflet of the plasma membrane. Does not show flippase activity toward phosphatidylcholine (PC). Contributes to the maintenance of membrane lipid asymmetry with a specific role in morphogenesis of muscle cells. In myoblasts, mediates PS enrichment at the inner leaflet of plasma membrane, triggering PIEZO1-dependent Ca2+ influx and Rho GTPases signal transduction, subsequently leading to the assembly of cortical actomyosin fibers and myotube formation. May be involved in the uptake of farnesyltransferase inhibitor drugs, such as lonafarnib. This chain is Phospholipid-transporting ATPase IH (ATP11A), found in Homo sapiens (Human).